Consider the following 2410-residue polypeptide: MHGLQGLCFRRAVIALALLLFHSVFAAPYSEDEEPWNLNQNKNASSVLEYSGEWADHDFFPSPDNWRMSFITVILDRWYDGDPSNNDIEKTPFEYDISEVSFRNGGDIVGLELSLDYLEGLGTQGIYIAGTPFVNMPWGADQYSPLDYTILDHHLGTIDQWRSTITAMHERGMYLVVDLTVATLGDLIGMVGHLNDTSGVDFNLNEYNAMWKTSEYRYVDFNFTNVYNTSCEYPRFWGEDGGPVSIQFKGCYVSDYDHYGDTEAFGSHPDWQRQLSKFASVQDRLRDWKPDVAEKLMHLSCLVISMLDVDGFRIDKATQMTADFIVDWSMYVRECAAKYNKKNFLIVGEVTGSSSYGSIYYNRGRQPDQRPPNVTAAFNYTSDESQYSLRDSDHYGFDGSAFHYSIYRALLRFLGMDSKMEIDFDVSSVLTTAWNGIQINEDAVNINTGTVEPLHMYGVANHDVFRWGAIENGTARLILGTMITSLLFPGIPLLYYGDEQGMYVLDNSANNYLYGRQAMNSARAWYIHGCYNGSATSYPTVDLSPAQRGCQDSWNYLDHFDIASAHRNVYRNIHSIRRHYLSLSEGWRFDHIANWTDDVYFPDSQPYASPMGLYSVLRGPMKEIQDFDSITNASNVSKSEVWVLYANRNDTHLWSYDCTDEDSAIIGPWKSGTTLRNLIYPYDTIELEDSWNSSWGCIPNIELDPYAFKLYVPEEDFIENDPIITSLTPEHDARVVASGNEIDLTIEFSRSMDCDSIKNALSVVSSTRPKNTTAVIDVDSSFCRNYSEDASTSLHGQTAGRFAWYGTLTNIDPGIHRISLKSVPTSDFSSRTLSTDNFLIRVGSTNNPIVHYSANYSDTLLIMQDGDLYINHSAPGAVLFRYSTDFQSHWSDWEEYNGGLTKVQASNWTGTRRQGWEGHHIHVQYWSDLGGSANHMQQSDYGFKYRRFLPHMFLEGDFNEYGYDSGVENRFLQKSDFYWEAGFISETYPAAIQLNVWGMNPDGIPDKTRVYGSQGNSTVLSRSDPASLVGNNITIYHPPPHGYLSYKILLRDDDMIYRLAPSGEWGVSIAIYVLCIVIPPLSAIVVSWAFKNSFYTVKFNKHGNNDLGKFYPLKSLVPFRKKNDLDSPAKVTPVVSGVSARKKKCVLIATLEYDITDWKIRIKIGGLGVMAQLMAQHLKHEDLVWVVPCVGDVVYPEAEEASPIEVKIIDQTYTINVYHHYLDNIKYVLLDAPVFRRQTSKEPYPARMDDLGSAIFYSAWNQCIAEVIRRNPIDIYHINDYHGALAPCYLLPDIIPCALSLHNAEFQGLWPLRTPEEKEEVCAVYNISQRVCTKYVQFGNVFNLLHAAVSYIRIHQKGFGAVGVSNKYGKRSWARYPIFWGLKKIGKLPNPDPTDTDEIVDDKAVAITDIDPDMEKSKVEHKRLAQEWAGLEVNEKYDLLVFVGRWSSQKGIDLIADIAPSLLESYKVQLICVGPIIDLYGKFAAEKLDVLQKKYPTRVFSQPKFTQLPPYIFSGADFALIPSRDEPFGLVAVEFGRKGALGIGARVGGLGQMPGWWYSVESSATPHLLKQFEQACQQALSSSQRTRARLRARSAKQRFPVSQWKAKLEALTDGCIKCSQKYGRNSRSRSSFYSLIHESFSRSSEVLPTSSDTNLDAKRAEEAEMIMIETPPTAEANTGAKLDRSLSLGSRRGPGHTTEDDASDGLDTIQEESMTAGDSTSGGSDISRYRAERLNPDSHSPSEYSFDSGDYEFDPQRSYYYDDLFDDDTTIRNAPSFRPQMGSFDAEHAVGATFSQDDLSDPARSVDSDSVSPPLPPFVAGSNPNARNNNNPYFYGNLHTESSLSLASVMSGKEKRDFSLTRVEETFTDEDGQALRSFSEKLQKLNAKNSKDDLCIEQYLMKSERSFFHERRAIKLGLQKPNKLHVNELSSHSGTEESESLSNGQTSYDDIIAMTDESNYTQLGDDDFKTIHGLKKFMLFKIYDWPIYSIFLALGQILAATAYQLTLFTGTSNIQTYEIYSVCAFFIGASFVWWFMFARLPSYYVLSIPWLFYAVALFLVGLPAFDTVAPGRVWITNVAAWIYAIASASGSIFFSLNFGEEGAVQTRIWVFRACLVQGVQQVWSAALWYWGAHLNKRLTAGEANTFKMSPAIPSITWPLSAVSILIFALLFKGLPEYYRQLSGSIPAFYKSLLRRKLVVWFCISVFLQNFWLSSLNGRSWSYLWDIGNIHQWQIFLLIVAFYIVLWALLLGVLAWISRTHSWIICVFGVGLGAPRWLQQFWATSNIGLYLPWAGYSGPYLGRTLWLWLGVLDAIQSVGIGMILLQTLTRRHVASTLMTGQIVGAVATMIGRGASPNREGPANVFIDFTKWNHGDGSSILASAPFWINIICQLAICVGYLAFFRRENLSRP.

S1643, S1644, and S1651 each carry phosphoserine. Position 1653 is a phosphothreonine (T1653). The disordered stretch occupies residues 1685–1706 (SLSLGSRRGPGHTTEDDASDGL). 2 positions are modified to phosphoserine: S1738 and S1812. The tract at residues 1796–1827 (QDDLSDPARSVDSDSVSPPLPPFVAGSNPNAR) is disordered. A compositionally biased stretch (low complexity) spans 1802–1827 (PARSVDSDSVSPPLPPFVAGSNPNAR).

Belongs to the glycosyltransferase group 1 family. In terms of assembly, interacts with sad1.

It carries out the reaction [(1-&gt;3)-alpha-D-glucosyl](n) + UDP-alpha-D-glucose = [(1-&gt;3)-alpha-D-glucosyl](n+1) + UDP + H(+). Required for alpha-1,3-glucan and alpha-1,4-glucan production which are required for cell wall synthesis. This is Cell wall alpha-1,3-glucan synthase ags1 (ags1) from Schizosaccharomyces pombe (strain 972 / ATCC 24843) (Fission yeast).